The following is a 192-amino-acid chain: MDLIFTSVLIGIGLAMDCLAVSFAVGAHQKTSRIRAAFILALFFGGFQGGMTLLGWLLGSGFADAIAAYDHWVAAGLLFIIGGKMVLDGIKDGHEEEAPDVFNFVAVFILAVATSIDALAVGLSFSLLHIVPLIPALIIGLISAIFSVGGVYSGGKIGHILGKRVDILGGVILTLIGIRILLEHLVWNGAGA.

6 helical membrane-spanning segments follow: residues 3-23 (LIFTSVLIGIGLAMDCLAVSF), 38-58 (FILALFFGGFQGGMTLLGWLL), 61-81 (GFADAIAAYDHWVAAGLLFII), 101-121 (VFNFVAVFILAVATSIDALAV), 130-150 (IVPLIPALIIGLISAIFSVGG), and 167-187 (ILGGVILTLIGIRILLEHLVW).

This sequence belongs to the MntP (TC 9.B.29) family.

Its subcellular location is the cell membrane. Its function is as follows. Probably functions as a manganese efflux pump. The chain is Putative manganese efflux pump MntP from Methanospirillum hungatei JF-1 (strain ATCC 27890 / DSM 864 / NBRC 100397 / JF-1).